Reading from the N-terminus, the 481-residue chain is RAC-alpha serine/threonine-protein kinase (481 aa).

In terms of domain architecture, PH spans 5–108 (AIVKEGWLHK…WIQVIQHVAD (104 aa)). The disordered stretch occupies residues 120-141 (VRSGDSPSDNSGAEEMEVSHSK). Ser127 and Ser130 each carry an O-linked (GlcNAc) serine glycan. One can recognise a Protein kinase domain in the interval 151–409 (FEYLKLLGKG…AKEIMQHKFF (259 aa)). ATP contacts are provided by residues 157–165 (LGKGTFGKV) and Lys180. Catalysis depends on Asp275, which acts as the Proton acceptor. Thr306 carries an O-linked (GlcNAc) threonine glycan. Thr309 bears the Phosphothreonine; by PDPK1 mark. O-linked (GlcNAc) threonine glycosylation occurs at Thr313. Positions 410 to 481 (AGIVWQDVYE…QFSYSASGNA (72 aa)) constitute an AGC-kinase C-terminal domain. Ser474 carries the post-translational modification Phosphoserine. The O-linked (GlcNAc) serine; alternate glycan is linked to Ser474. A Phosphotyrosine modification is found at Tyr475.

Belongs to the protein kinase superfamily. AGC Ser/Thr protein kinase family. RAC subfamily. In terms of processing, cleavage by caspase-3/CASP3. Cleaved at the caspase-3 consensus site Asp-463 during apoptosis, resulting in down-regulation of the AKT signaling pathway and decreased cell survival. Phosphorylation on Thr-309 and Ser-474 is required for full activity. Phosphorylation of the activation loop at Thr-309 by PDPK1/PDK1 is a prerequisite for full activation. Phosphorylation by mTORC2 at Ser-474 in response to growth factors plays a key role in AKT1 activation by facilitating subsequent phosphorylation of the activation loop by PDPK1/PDK1. In terms of tissue distribution, expressed in the oocyte.

It is found in the cytoplasm. It localises to the nucleus. The enzyme catalyses L-seryl-[protein] + ATP = O-phospho-L-seryl-[protein] + ADP + H(+). The catalysed reaction is L-threonyl-[protein] + ATP = O-phospho-L-threonyl-[protein] + ADP + H(+). Its activity is regulated as follows. Activated in response to insulin. Three specific sites, one in the kinase domain (Thr-309) and the two other ones in the C-terminal regulatory region (Ser-474 and Tyr-475), need to be phosphorylated for its full activation. Its function is as follows. AKT1 is one of several closely related serine/threonine-protein kinases known as the AKT kinase, and which regulate many processes including metabolism, proliferation, cell survival, growth and angiogenesis. This is mediated through serine and/or threonine phosphorylation of a range of downstream substrates. Over 100 substrate candidates have been reported so far, but for most of them, no isoform specificity has been reported. Signals downstream of phosphatidylinositol 3-kinase (PI(3)K) to mediate the effects of various growth factors such as platelet-derived growth factor (PDGF), epidermal growth factor (EGF), insulin and insulin-like growth factor 1 (IGF1). Plays a role as a key modulator of the AKT-mTOR signaling pathway controlling the tempo of the process of newborn neurons integration during adult neurogenesis, including correct neuron positioning, dendritic development and synapse formation. Plays a role in glucose transport by mediating insulin-induced translocation of the GLUT4 glucose transporter to the cell surface. Mediates the antiapoptotic effects of IGF1. Mediates insulin-stimulated protein synthesis, partly by playing a role in both insulin-induced phosphorylation of 4E-BP1 and in insulin-induced activation of p70 S6 kinase. Promotes glycogen synthesis by mediating the insulin-induced activation of glycogen synthase. Required for insulin-stimulated meiotic reinitiation during oocyte maturation. May be involved in the regulation of vesicular functions such as preciliary trafficking and endocytic recycling. The sequence is that of RAC-alpha serine/threonine-protein kinase from Xenopus laevis (African clawed frog).